A 31-amino-acid chain; its full sequence is uncharacterized protein (31 aa).

This is an uncharacterized protein from Saccharomyces cerevisiae (strain ATCC 204508 / S288c) (Baker's yeast).